Reading from the N-terminus, the 234-residue chain is Putative gustatory receptor clone PTE38 (234 aa).

A helical membrane pass occupies residues 1–11 (MYLFFSNLSFN). Over 12–42 (DICIITTTIPKMLMNVQSHDQSITYLGCLSQ) the chain is Extracellular. A disulfide bond links Cys39 and Cys121. A helical transmembrane segment spans residues 43-62 (VYLIVNFGSIESCLLAVMAY). Over 63-84 (DRYVAICHPLKYTVIMNHYFCV) the chain is Cytoplasmic. A helical membrane pass occupies residues 85 to 105 (MLLLFACSLALHMCLFHILMV). The Extracellular segment spans residues 106–138 (LILTFCTKTEIPHFFCELAHIIKLTCSDNFINY). The chain crosses the membrane as a helical span at residues 139 to 160 (LLIYTVSVLFFGVHIVGIILSY). At 161–182 (IYTVSSVLRMSLLGGMYKAFST) the chain is on the cytoplasmic side. Residues 183–202 (CGSHLSVVSLFYGTGFGVHI) traverse the membrane as a helical segment. Topologically, residues 203–212 (SSPLTDSPRK) are extracellular. Residues 213-234 (TVVASVMYTVVTQMHGPFIYSL) traverse the membrane as a helical segment.

The protein belongs to the G-protein coupled receptor 1 family. Tongue specific.

The protein localises to the cell membrane. Functionally, possible taste receptor. The protein is Putative gustatory receptor clone PTE38 of Rattus norvegicus (Rat).